We begin with the raw amino-acid sequence, 463 residues long: Retinoic acid receptor RXR-gamma (463 aa).

The segment at 1–138 (MYGNYSHFMK…TSPGSLVKHI (138 aa)) is modulating. The tract at residues 16–53 (GGSPGHTGSTSMSPSVALPTGKPMDSHPSYTDTPVSAP) is disordered. 2 consecutive NR C4-type zinc fingers follow at residues 139–159 (CAIC…CEGC) and 175–199 (CRDN…YQKC). The nuclear receptor DNA-binding region spans 139–204 (CAICGDRSSG…RYQKCLVMGM (66 aa)). Positions 205–230 (KREAVQEERQRSRERAESEAECASTG) are hinge. The NR LBD domain occupies 231 to 459 (HEDMPVERIL…TFLMEMLETP (229 aa)).

This sequence belongs to the nuclear hormone receptor family. NR2 subfamily. As to quaternary structure, homodimer. Heterodimer with a RAR molecule. Binds DNA preferentially as a RAR/RXR heterodimer. Interacts with RARA. Acetylated by EP300. In terms of tissue distribution, expressed in the liver, but not detected in the adrenal gland (at protein level). Restricted expression in adrenal gland, kidney, liver, brain and lungs. Strong expression in heart and muscles.

It is found in the nucleus. It localises to the cytoplasm. In terms of biological role, receptor for retinoic acid. Retinoic acid receptors bind as heterodimers to their target response elements in response to their ligands, all-trans or 9-cis retinoic acid, and regulate gene expression in various biological processes. The RAR/RXR heterodimers bind to the retinoic acid response elements (RARE) composed of tandem 5'-AGGTCA-3' sites known as DR1-DR5. The high affinity ligand for RXRs is 9-cis retinoic acid. The protein is Retinoic acid receptor RXR-gamma (Rxrg) of Rattus norvegicus (Rat).